Here is a 285-residue protein sequence, read N- to C-terminus: Inositol polyphosphate 1-phosphatase (285 aa).

Positions 68, 106, 108, and 109 each coordinate Mg(2+). 1D-myo-inositol 1,4-bisphosphate contacts are provided by aspartate 109, glycine 110, threonine 111, serine 173, glycine 195, serine 197, and lysine 200. Aspartate 223 contacts Mg(2+).

This sequence belongs to the inositol monophosphatase superfamily. In terms of assembly, monomer. It depends on Mg(2+) as a cofactor.

It localises to the cytoplasm. It catalyses the reaction 1D-myo-inositol 1,4-bisphosphate + H2O = 1D-myo-inositol 4-phosphate + phosphate. The catalysed reaction is adenosine 3',5'-bisphosphate + H2O = AMP + phosphate. Partially inhibited by Li(2+). Catalyzes the hydrolysis of the 1-position phosphate from inositol 1,4-bisphosphate. Is also able to convert 3'(2')-phosphoadenosine 5'-phosphate (PAP) to AMP but with less efficiency. The polypeptide is Inositol polyphosphate 1-phosphatase (Entamoeba histolytica (strain ATCC 30459 / HM-1:IMSS / ABRM)).